The sequence spans 996 residues: Sodium/potassium-transporting ATPase subunit alpha-A (996 aa).

A run of 2 helical transmembrane segments spans residues 73–93 and 107–123; these read LFGG…IAYT and LYLG…TGCF. Residues 191 to 211 form a disordered region; it reads DNSSLTGESEPQSRSTECTND. 2 consecutive transmembrane segments (helical) span residues 268–290 and 297–325; these read FIHI…SFLY and AAIF…TLTA. The 4-aspartylphosphate intermediate role is filled by aspartate 353. Residue lysine 483 participates in ATP binding. Residues aspartate 692 and aspartate 696 each contribute to the Mg(2+) site. 4 helical membrane passes run 762–785, 820–847, 889–909, and 926–951; these read LSPF…ILCI, ERLI…VIMG, YTCH…DLII, and TLNF…DKGL.

It belongs to the cation transport ATPase (P-type) (TC 3.A.3) family. Type IIC subfamily. In terms of assembly, the sodium/potassium-transporting ATPase is composed of a catalytic alpha subunit, an auxiliary non-catalytic beta subunit and an additional regulatory subunit.

It is found in the cell membrane. The catalysed reaction is K(+)(out) + Na(+)(in) + ATP + H2O = K(+)(in) + Na(+)(out) + ADP + phosphate + H(+). Functionally, this is the catalytic component of the active enzyme, which catalyzes the hydrolysis of ATP coupled with the exchange of sodium and potassium ions across the plasma membrane. This action creates the electrochemical gradient of sodium and potassium ions, providing the energy for active transport of various nutrients. In Artemia franciscana (Brine shrimp), this protein is Sodium/potassium-transporting ATPase subunit alpha-A.